The sequence spans 252 residues: Imidazole glycerol phosphate synthase subunit HisF (252 aa).

Catalysis depends on residues Asp-11 and Asp-130.

This sequence belongs to the HisA/HisF family. In terms of assembly, heterodimer of HisH and HisF.

The protein resides in the cytoplasm. The enzyme catalyses 5-[(5-phospho-1-deoxy-D-ribulos-1-ylimino)methylamino]-1-(5-phospho-beta-D-ribosyl)imidazole-4-carboxamide + L-glutamine = D-erythro-1-(imidazol-4-yl)glycerol 3-phosphate + 5-amino-1-(5-phospho-beta-D-ribosyl)imidazole-4-carboxamide + L-glutamate + H(+). Its pathway is amino-acid biosynthesis; L-histidine biosynthesis; L-histidine from 5-phospho-alpha-D-ribose 1-diphosphate: step 5/9. Functionally, IGPS catalyzes the conversion of PRFAR and glutamine to IGP, AICAR and glutamate. The HisF subunit catalyzes the cyclization activity that produces IGP and AICAR from PRFAR using the ammonia provided by the HisH subunit. This is Imidazole glycerol phosphate synthase subunit HisF from Staphylococcus aureus (strain Mu3 / ATCC 700698).